The sequence spans 376 residues: Queuine tRNA-ribosyltransferase (376 aa).

The active-site Proton acceptor is the D90. Substrate is bound by residues 90–94, D144, Q193, and G220; that span reads DSGGF. The segment at 251 to 257 is RNA binding; sequence GVGTPED. The active-site Nucleophile is D270. The interval 275 to 279 is RNA binding; important for wobble base 34 recognition; it reads TRNAR. Residues C308, C310, C313, and H339 each coordinate Zn(2+).

Belongs to the queuine tRNA-ribosyltransferase family. In terms of assembly, homodimer. Within each dimer, one monomer is responsible for RNA recognition and catalysis, while the other monomer binds to the replacement base PreQ1. Requires Zn(2+) as cofactor.

The enzyme catalyses 7-aminomethyl-7-carbaguanine + guanosine(34) in tRNA = 7-aminomethyl-7-carbaguanosine(34) in tRNA + guanine. The protein operates within tRNA modification; tRNA-queuosine biosynthesis. Functionally, catalyzes the base-exchange of a guanine (G) residue with the queuine precursor 7-aminomethyl-7-deazaguanine (PreQ1) at position 34 (anticodon wobble position) in tRNAs with GU(N) anticodons (tRNA-Asp, -Asn, -His and -Tyr). Catalysis occurs through a double-displacement mechanism. The nucleophile active site attacks the C1' of nucleotide 34 to detach the guanine base from the RNA, forming a covalent enzyme-RNA intermediate. The proton acceptor active site deprotonates the incoming PreQ1, allowing a nucleophilic attack on the C1' of the ribose to form the product. After dissociation, two additional enzymatic reactions on the tRNA convert PreQ1 to queuine (Q), resulting in the hypermodified nucleoside queuosine (7-(((4,5-cis-dihydroxy-2-cyclopenten-1-yl)amino)methyl)-7-deazaguanosine). This is Queuine tRNA-ribosyltransferase from Campylobacter concisus (strain 13826).